The following is a 208-amino-acid chain: MKVVEVKHPLVKHKLGLMRSADINTKDFRALATEVGSLLTYEAATDLETELVEIDGWCGKVEVERIKGKKVTVVPILRAGLGMMDGVLEHIPSARISVVGIYRDEETLEPVPYFTKLANDVEERLAIIVDPMLATGGSMIATIDLLKKSGCKHIKVLVLVAAPEGINALQAAHPDIELFTASIDSHLNQHGYIVPGLGDAGDKIFGTK.

Residues R78, R103, and 130–138 (DPMLATGGS) contribute to the 5-phospho-alpha-D-ribose 1-diphosphate site. Residues I193 and 198–200 (GDA) contribute to the uracil site. D199 lines the 5-phospho-alpha-D-ribose 1-diphosphate pocket.

This sequence belongs to the UPRTase family. Requires Mg(2+) as cofactor.

It catalyses the reaction UMP + diphosphate = 5-phospho-alpha-D-ribose 1-diphosphate + uracil. It participates in pyrimidine metabolism; UMP biosynthesis via salvage pathway; UMP from uracil: step 1/1. Its activity is regulated as follows. Allosterically activated by GTP. In terms of biological role, catalyzes the conversion of uracil and 5-phospho-alpha-D-ribose 1-diphosphate (PRPP) to UMP and diphosphate. The polypeptide is Uracil phosphoribosyltransferase (Haemophilus ducreyi (strain 35000HP / ATCC 700724)).